Here is a 458-residue protein sequence, read N- to C-terminus: UDP-N-acetylmuramate--L-alanine ligase (458 aa).

115–121 lines the ATP pocket; it reads GSHGKTT.

Belongs to the MurCDEF family.

The protein resides in the cytoplasm. The catalysed reaction is UDP-N-acetyl-alpha-D-muramate + L-alanine + ATP = UDP-N-acetyl-alpha-D-muramoyl-L-alanine + ADP + phosphate + H(+). The protein operates within cell wall biogenesis; peptidoglycan biosynthesis. Cell wall formation. The protein is UDP-N-acetylmuramate--L-alanine ligase of Anaeromyxobacter dehalogenans (strain 2CP-1 / ATCC BAA-258).